Reading from the N-terminus, the 394-residue chain is MDGPAQQTDTVMAEAAAAQQPAPPSQPVAGIDNIPATLSHGGRFIQYNIFGNVFEVTAKYKPPIMPIGKGAYGIVCSALNSETNEHVATKKIANAFDNKIDAKRTLREIKLLRHMDHENIVAIRDIIPPPQREAFNDVYIAYELMDTDLHQIIRSNQGLSEEHCQYFLYQILRGLKYIHSANVLHRDLKPRNLLLNANCDLKICDFGLARVTSETDFMTEYVVTRWYRPPELLLNSSDYTAAIDVWSVGCIFMELMDRKPLFPGRDHVQQLRLLMELIGTPSEAEMEFLNENAKRYIRQLPLYRRQSFVEKFPHVNPAAIDLVEKMLTFDPRRRLTVEDALAHPYLTSLHDISDEPVCTTPFSFDFEQHALTEEQMKELIYREGLAFNPEYQHM.

Polar residues predominate over residues 1–10; that stretch reads MDGPAQQTDT. Positions 1–27 are disordered; the sequence is MDGPAQQTDTVMAEAAAAQQPAPPSQP. Residues 61 to 346 enclose the Protein kinase domain; it reads KPPIMPIGKG…VEDALAHPYL (286 aa). Residues 67–75 and Lys90 each bind ATP; that span reads IGKGAYGIV. The active-site Proton acceptor is Asp187. A Phosphothreonine modification is found at Thr219. Positions 219–221 match the TXY motif; that stretch reads TEY. Tyr221 bears the Phosphotyrosine mark. A Phosphothreonine modification is found at Thr224.

It belongs to the protein kinase superfamily. CMGC Ser/Thr protein kinase family. MAP kinase subfamily. Mg(2+) serves as cofactor. In terms of processing, activated by cold, wounding and UV-C in a cultivar-dependent manner; phosphorylated at Tyr-221 in cv. Subicho but not in cv. Pungchon. In terms of tissue distribution, expressed constitutively in roots, stems, flowers and fruits of the hot pepper (cv. Subicho).

The enzyme catalyses L-seryl-[protein] + ATP = O-phospho-L-seryl-[protein] + ADP + H(+). It carries out the reaction L-threonyl-[protein] + ATP = O-phospho-L-threonyl-[protein] + ADP + H(+). Its activity is regulated as follows. Activated by threonine and tyrosine phosphorylation. In terms of biological role, protein kinase involved in oxidative stress-mediated and innate immune MAP kinase signaling cascades. The polypeptide is Mitogen-activated protein kinase 2 (Capsicum annuum (Capsicum pepper)).